The chain runs to 237 residues: UPF0174 protein YaaW (237 aa).

It belongs to the UPF0174 family.

This chain is UPF0174 protein YaaW (yaaW), found in Escherichia coli (strain K12).